The following is a 244-amino-acid chain: tRNA pseudouridine synthase A (244 aa).

D52 serves as the catalytic Nucleophile. Residue Y110 participates in substrate binding.

The protein belongs to the tRNA pseudouridine synthase TruA family. Homodimer.

The catalysed reaction is uridine(38/39/40) in tRNA = pseudouridine(38/39/40) in tRNA. In terms of biological role, formation of pseudouridine at positions 38, 39 and 40 in the anticodon stem and loop of transfer RNAs. The sequence is that of tRNA pseudouridine synthase A from Geotalea daltonii (strain DSM 22248 / JCM 15807 / FRC-32) (Geobacter daltonii).